The primary structure comprises 164 residues: Small ribosomal subunit protein uS3m (164 aa).

The N-terminal 23 residues, 1 to 23 (MLRSIQHVEALSSRQISTTSMLL), are a transit peptide targeting the mitochondrion.

This sequence belongs to the universal ribosomal protein uS3 family. As to quaternary structure, component of the mitochondrial ribosome small subunit (28S) which comprises a 12S rRNA and about 30 distinct proteins.

The protein resides in the mitochondrion. This Caenorhabditis elegans protein is Small ribosomal subunit protein uS3m (mrps-24).